The chain runs to 283 residues: uncharacterized protein (283 aa).

The N-myristoyl glycine; by host moiety is linked to residue G2. N-linked (GlcNAc...) asparagine; by host glycosylation is found at N31, N95, N105, N108, N137, and N147. Helical transmembrane passes span 181-201 and 250-270; these read IIAA…VVYF and FIVL…LDIP. N-linked (GlcNAc...) asparagine; by host glycosylation occurs at N277.

It localises to the membrane. This is an uncharacterized protein from Acanthamoeba polyphaga (Amoeba).